The sequence spans 96 residues: Small ribosomal subunit protein bS6 (96 aa).

Belongs to the bacterial ribosomal protein bS6 family.

Binds together with bS18 to 16S ribosomal RNA. The chain is Small ribosomal subunit protein bS6 from Gloeobacter violaceus (strain ATCC 29082 / PCC 7421).